Here is a 358-residue protein sequence, read N- to C-terminus: Cytochrome c peroxidase, mitochondrial (358 aa).

The transit peptide at 1–38 (MAASRTATRTLRALRTSTRPALTAAPRAAFRQGGRRLY) directs the protein to the mitochondrion. Catalysis depends on His-119, which acts as the Proton acceptor. The disordered stretch occupies residues 192-214 (PYRPGRQDRDAAGCTPDGRLPDA). His-242 is a binding site for heme b. The active-site Tryptophan radical intermediate is Trp-258.

Belongs to the peroxidase family. Cytochrome c peroxidase subfamily. In terms of assembly, forms a one-to-one complex with cytochrome c. The cofactor is heme b.

It localises to the mitochondrion matrix. The protein localises to the mitochondrion intermembrane space. The enzyme catalyses 2 Fe(II)-[cytochrome c] + H2O2 + 2 H(+) = 2 Fe(III)-[cytochrome c] + 2 H2O. Destroys radicals which are normally produced within the cells and which are toxic to biological systems. This chain is Cytochrome c peroxidase, mitochondrial (ccp-1), found in Neurospora crassa (strain ATCC 24698 / 74-OR23-1A / CBS 708.71 / DSM 1257 / FGSC 987).